The following is a 172-amino-acid chain: Large ribosomal subunit protein uL10 (172 aa).

The protein belongs to the universal ribosomal protein uL10 family. As to quaternary structure, part of the ribosomal stalk of the 50S ribosomal subunit. The N-terminus interacts with L11 and the large rRNA to form the base of the stalk. The C-terminus forms an elongated spine to which L12 dimers bind in a sequential fashion forming a multimeric L10(L12)X complex.

Forms part of the ribosomal stalk, playing a central role in the interaction of the ribosome with GTP-bound translation factors. The polypeptide is Large ribosomal subunit protein uL10 (Methylorubrum populi (strain ATCC BAA-705 / NCIMB 13946 / BJ001) (Methylobacterium populi)).